An 85-amino-acid chain; its full sequence is uncharacterized protein (85 aa).

A signal peptide spans 1-19 (MKTIFTVGAVVLATCLLSG). Cys20 carries N-palmitoyl cysteine lipidation. The S-diacylglycerol cysteine moiety is linked to residue Cys20.

Its subcellular location is the cell outer membrane. This is an uncharacterized protein from Escherichia coli (strain K12).